The primary structure comprises 564 residues: Septin-9 (564 aa).

The residue at position 1 (methionine 1) is an N-acetylmethionine. Serine 12 carries the post-translational modification Phosphoserine. 2 positions are modified to phosphothreonine: threonine 24 and threonine 31. Disordered stretches follow at residues 38 to 165 (VASS…PVTD) and 178 to 224 (PAEA…DSEV). N6-acetyllysine is present on lysine 44. Residues serine 64, serine 67, and serine 71 each carry the phosphoserine modification. A compositionally biased stretch (polar residues) spans 95-109 (DISSKQVESTASTPG). Basic and acidic residues predominate over residues 116-134 (KRAEVLGHKTPEPVPRRTE). Threonine 125 carries the phosphothreonine modification. Over residues 190–203 (TLENSEAPMSQLQS) the composition is skewed to polar residues. Tyrosine 258 carries the post-translational modification Phosphotyrosine. The 272-residue stretch at 275-546 (QGFEFNIMVV…EAYRVKRLNE (272 aa)) folds into the Septin-type G domain. Positions 285 to 292 (GQSGLGKS) are G1 motif. 285-292 (GQSGLGKS) serves as a coordination point for GTP. Residues serine 307 and serine 312 each carry the phosphoserine modification. GTP is bound by residues threonine 319, glycine 345, 425–433 (KADTLTLEE), glycine 480, and arginine 495. The tract at residues 342-345 (DTPG) is G3 motif. A G4 motif region spans residues 424–427 (AKAD).

This sequence belongs to the TRAFAC class TrmE-Era-EngA-EngB-Septin-like GTPase superfamily. Septin GTPase family. In terms of assembly, septins polymerize into heterooligomeric protein complexes that form filaments, and associate with cellular membranes, actin filaments, and microtubules. GTPase activity is required for filament formation. Interacts with SEPTIN2, SEPTIN6, SEPTIN7, SEPTIN11 and SEPTIN14. Interacts with RTKN and ARHGEF18. In terms of tissue distribution, expressed in the brain, mainly in the perikarya and processes of astrocytes in the cerebellum, dentate gyrus and corpus callosum (at protein level). In the sciatic nerve, highly expressed in Schwann cells (at protein level). Isoforms are differentially expressed in testes, kidney, liver, heart, spleen and brain. Undetectable in skeletal muscle.

It localises to the cytoplasm. Its subcellular location is the cytoskeleton. Filament-forming cytoskeletal GTPase. May play a role in cytokinesis (Potential). This chain is Septin-9, found in Rattus norvegicus (Rat).